Reading from the N-terminus, the 259-residue chain is Ribonuclease PH (259 aa).

Phosphate-binding positions include Arg88 and 126-128 (GTR).

It belongs to the RNase PH family. Homohexameric ring arranged as a trimer of dimers.

It carries out the reaction tRNA(n+1) + phosphate = tRNA(n) + a ribonucleoside 5'-diphosphate. In terms of biological role, phosphorolytic 3'-5' exoribonuclease that plays an important role in tRNA 3'-end maturation. Removes nucleotide residues following the 3'-CCA terminus of tRNAs; can also add nucleotides to the ends of RNA molecules by using nucleoside diphosphates as substrates, but this may not be physiologically important. Probably plays a role in initiation of 16S rRNA degradation (leading to ribosome degradation) during starvation. This Mycobacterium leprae (strain Br4923) protein is Ribonuclease PH.